The chain runs to 917 residues: Protein STE5 (917 aa).

Disordered regions lie at residues 1–25 and 58–151; these read MMETPTDNIVSPFHNFGSSTQYSGT and FQRS…LSDN. The span at 16–25 shows a compositional bias: polar residues; sequence FGSSTQYSGT. Residues 69–84 show a composition bias toward low complexity; sequence SPSPISSSTFSFSPKS. 2 stretches are compositionally biased toward polar residues: residues 85-110 and 118-138; these read RVTSSNSSGNEDGNLMNTPSTVSTDY and TSSLPRPNSNLFHASNSNLSR. A Phosphoserine modification is found at Ser-329. Acidic residues predominate over residues 778–794; the sequence is HDDDDEEDNDDSTDNEL. The interval 778–821 is disordered; that stretch reads HDDDDEEDNDDSTDNELDNSSGSLSDAESTTTIHIDSPFDNENA. The segment covering 799–821 has biased composition (polar residues); that stretch reads GSLSDAESTTTIHIDSPFDNENA.

This sequence to yeast FAR1. Post-translationally, may be regulated at the phosphorylation level, and by the mating type of the cell and depends on an intact pheromone-response pathway.

It is found in the cytoplasm. Component of the pheromone signal transduction pathway. It mediates pheromone signals acting between STE20 and STE11. It is absolutely required for pheromone-induced transcription of FUS1. May play a role in cell-cycle arrest in response to pheromone. The sequence is that of Protein STE5 (STE5) from Saccharomyces cerevisiae (strain ATCC 204508 / S288c) (Baker's yeast).